Here is a 414-residue protein sequence, read N- to C-terminus: CCA-adding enzyme (414 aa).

Residues Gly8 and Arg11 each coordinate ATP. Gly8 and Arg11 together coordinate CTP. The Mg(2+) site is built by Asp21 and Asp23. Residues Arg91, Arg137, and Arg140 each coordinate ATP. Residues Arg91, Arg137, and Arg140 each coordinate CTP.

This sequence belongs to the tRNA nucleotidyltransferase/poly(A) polymerase family. Bacterial CCA-adding enzyme type 2 subfamily. The cofactor is Mg(2+).

It carries out the reaction a tRNA precursor + 2 CTP + ATP = a tRNA with a 3' CCA end + 3 diphosphate. The enzyme catalyses a tRNA with a 3' CCA end + 2 CTP + ATP = a tRNA with a 3' CCACCA end + 3 diphosphate. Functionally, catalyzes the addition and repair of the essential 3'-terminal CCA sequence in tRNAs without using a nucleic acid template. Adds these three nucleotides in the order of C, C, and A to the tRNA nucleotide-73, using CTP and ATP as substrates and producing inorganic pyrophosphate. tRNA 3'-terminal CCA addition is required both for tRNA processing and repair. Also involved in tRNA surveillance by mediating tandem CCA addition to generate a CCACCA at the 3' terminus of unstable tRNAs. While stable tRNAs receive only 3'-terminal CCA, unstable tRNAs are marked with CCACCA and rapidly degraded. The polypeptide is CCA-adding enzyme (Buchnera aphidicola subsp. Acyrthosiphon pisum (strain Tuc7)).